A 138-amino-acid chain; its full sequence is Putative pre-16S rRNA nuclease (138 aa).

It belongs to the YqgF nuclease family.

The protein resides in the cytoplasm. Could be a nuclease involved in processing of the 5'-end of pre-16S rRNA. This is Putative pre-16S rRNA nuclease from Escherichia coli O157:H7.